The sequence spans 337 residues: Major envelope glycoprotein (337 aa).

4 N-linked (GlcNAc...) asparagine; by host glycosylation sites follow: Asn-76, Asn-114, Asn-271, and Asn-301.

This sequence belongs to the baculoviridae gp64 family. In terms of processing, palmitoylated.

It is found in the virion membrane. The protein localises to the host cell membrane. Envelope phosphoglycoprotein which mediates the fusion of viral and host endosomal membranes leading to virus entry into the host cell. In Lepidoptera (butterflies and moths), this protein is Major envelope glycoprotein (GP67).